The sequence spans 1492 residues: Copper-transporting ATPase 1 (1492 aa).

Over 1 to 645 (MEPNMDANSI…KREIKQWRGS (645 aa)) the chain is Cytoplasmic. 2 HMA domains span residues 8–74 (NSIT…FDAL) and 85–151 (TNTV…LDMG). Cu(+)-binding residues include Thr-18, Cys-19, and Cys-22. Residue Thr-152 is modified to Phosphothreonine. Residues 171 to 237 (VLLKMRVEGM…QIEAVGFPAF (67 aa)) enclose the HMA 3 domain. Residues Cys-182 and Cys-185 each coordinate Cu(+). Position 270 is a phosphoserine (Ser-270). An HMA 4 domain is found at 277–343 (SAITFTIDGM…AIEAVSPGQY (67 aa)). Cu(+) is bound by residues Cys-288 and Cys-291. At Thr-327 the chain carries Phosphothreonine. Phosphoserine occurs at positions 339, 353, 357, and 362. HMA domains are found at residues 377-443 (QEVV…FDAV), 480-546 (NKCY…FGAV), and 556-622 (GILE…FEAS). Residues Cys-388, Cys-391, Cys-491, Cys-494, Cys-567, and Cys-570 each coordinate Cu(+). A helical membrane pass occupies residues 646–667 (FLVSLFFCIPVMGLMIYMMVMD). At 668–706 (HHLATLNHNQNMSNEEMINMHSSMFLERQILPGLSIMNL) the chain is on the extracellular side. An N-linked (GlcNAc...) asparagine glycan is attached at Asn-678. A helical membrane pass occupies residues 707–726 (LSLLLCLPVQFCGGWYFYIQ). Over 727–733 (AYKALRH) the chain is Cytoplasmic. Residues 734–754 (KTANMDVLIVLATTIAFAYSL) form a helical membrane-spanning segment. At 755–773 (VILLVAMYERAKVNPITFF) the chain is on the extracellular side. A helical membrane pass occupies residues 774-794 (DTPPMLFVFIALGRWLEHIAK). Over 795-927 (GKTSEALAKL…SKAPIQQFAD (133 aa)) the chain is Cytoplasmic. The helical transmembrane segment at 928–951 (KLSGYFVPFIVLVSIVTLLVWIII) threads the bilayer. At 952 to 981 (GFQNFEIVEAYFPGYNRSISRTETIIRFAF) the chain is on the extracellular side. A helical transmembrane segment spans residues 982–1003 (QASITVLCIACPCSLGLATPTA). The Cytoplasmic segment spans residues 1004-1348 (VMVGTGVGAQ…LSRKTVKRIR (345 aa)). Asp-1036 functions as the 4-aspartylphosphate intermediate in the catalytic mechanism. ATP is bound at residue Glu-1073. Thr-1204 carries the post-translational modification Phosphothreonine. Residues Asp-1293 and Asp-1297 each contribute to the Mg(2+) site. Residues 1349 to 1366 (INFVFALIYNLIGIPIAA) form a helical membrane-spanning segment. The Extracellular portion of the chain corresponds to 1367–1377 (GVFLPIGLVLQ). The chain crosses the membrane as a helical span at residues 1378–1397 (PWMGSAAMAASSVSVVLSSL). Residues 1398–1492 (FLKLYRKPTY…DFREDDDTTL (95 aa)) are Cytoplasmic-facing. A phosphoserine mark is found at Ser-1422, Ser-1424, Ser-1452, Ser-1455, and Ser-1458. An Endocytosis signal motif is present at residues 1459–1460 (LL). Phosphoserine occurs at positions 1461, 1465, 1468, and 1478. The tract at residues 1478–1492 (SLLVGDFREDDDTTL) is PDZD11-binding. The Endocytosis signal signature appears at 1479–1480 (LL).

Belongs to the cation transport ATPase (P-type) (TC 3.A.3) family. Type IB subfamily. As to quaternary structure, monomer. Interacts with PDZD11. Interacts with ATOX1 and COMMD1. Interacts with TYRP1. Directly interacts with SOD3; this interaction is copper-dependent and is required for SOD3 activity. As to expression, expressed in hippocampal neuron (at protein level). Expressed in anterior pituitary gland (at protein level).

The protein resides in the golgi apparatus. The protein localises to the trans-Golgi network membrane. It is found in the cell membrane. Its subcellular location is the melanosome membrane. It localises to the early endosome membrane. The protein resides in the cell projection. The protein localises to the axon. It is found in the dendrite. Its subcellular location is the postsynaptic density. It carries out the reaction Cu(+)(in) + ATP + H2O = Cu(+)(out) + ADP + phosphate + H(+). ATP-driven copper (Cu(+)) ion pump that plays an important role in intracellular copper ion homeostasis. Within a catalytic cycle, acquires Cu(+) ion from donor protein on the cytoplasmic side of the membrane and delivers it to acceptor protein on the lumenal side. The transfer of Cu(+) ion across the membrane is coupled to ATP hydrolysis and is associated with a transient phosphorylation that shifts the pump conformation from inward-facing to outward-facing state. Under physiological conditions, at low cytosolic copper concentration, it is localized at the trans-Golgi network (TGN) where it transfers Cu(+) ions to cuproenzymes of the secretory pathway. Upon elevated cytosolic copper concentrations, it relocalizes to the plasma membrane where it is responsible for the export of excess Cu(+) ions. May play a dual role in neuron function and survival by regulating cooper efflux and neuronal transmission at the synapse as well as by supplying Cu(+) ions to enzymes such as PAM, TYR and SOD3. In the melanosomes of pigmented cells, provides copper cofactor to TYR to form an active TYR holoenzyme for melanin biosynthesis. The chain is Copper-transporting ATPase 1 from Rattus norvegicus (Rat).